The sequence spans 361 residues: Tyrosine--tRNA ligase (361 aa).

L-tyrosine-binding residues include Y36, Y162, Q166, D169, and Q184. The 'KMSKS' region signature appears at 236 to 240; it reads KMSKS. K239 serves as a coordination point for ATP.

The protein belongs to the class-I aminoacyl-tRNA synthetase family. TyrS type 4 subfamily. In terms of assembly, homodimer.

The protein localises to the cytoplasm. The catalysed reaction is tRNA(Tyr) + L-tyrosine + ATP = L-tyrosyl-tRNA(Tyr) + AMP + diphosphate + H(+). Catalyzes the attachment of tyrosine to tRNA(Tyr) in a two-step reaction: tyrosine is first activated by ATP to form Tyr-AMP and then transferred to the acceptor end of tRNA(Tyr). The protein is Tyrosine--tRNA ligase of Saccharolobus islandicus (strain Y.N.15.51 / Yellowstone #2) (Sulfolobus islandicus).